A 482-amino-acid polypeptide reads, in one-letter code: Protein DETOXIFICATION 13 (482 aa).

12 helical membrane passes run 39-59 (LICF…LQII), 77-97 (LASS…SCAL), 124-144 (LALV…LLVF), 159-179 (AACL…TRYF), 188-208 (LLIT…LLVY), 218-238 (ALAL…LMCF), 268-288 (AAMI…SGLL), 297-317 (VLSV…AIAA), 337-357 (IVVY…STSL), 381-401 (MAPL…LSGI), 416-436 (LGAF…WIHL), and 439-459 (VGLW…LTLV).

It belongs to the multi antimicrobial extrusion (MATE) (TC 2.A.66.1) family.

The protein localises to the membrane. The polypeptide is Protein DETOXIFICATION 13 (Arabidopsis thaliana (Mouse-ear cress)).